Consider the following 580-residue polypeptide: Protein O-linked-mannose beta-1,4-N-acetylglucosaminyltransferase 2 (580 aa).

At 1 to 4 (MHLS) the chain is on the cytoplasmic side. A helical; Signal-anchor for type II membrane protein transmembrane segment spans residues 5 to 25 (AVLNALLVSVLAAVLWKHVRL). The Lumenal portion of the chain corresponds to 26 to 580 (REHAASLEEE…PFADVLVCST (555 aa)). N-linked (GlcNAc...) asparagine glycans are attached at residues Asn99 and Asn276. Residues 488-580 (ARCQASVQGA…PFADVLVCST (93 aa)) enclose the Fibronectin type-III domain.

This sequence belongs to the glycosyltransferase 61 family.

Its subcellular location is the endoplasmic reticulum membrane. The catalysed reaction is 3-O-(alpha-D-mannosyl)-L-threonyl-[protein] + UDP-N-acetyl-alpha-D-glucosamine = 3-O-(N-acetyl-beta-D-glucosaminyl-(1-&gt;4)-alpha-D-mannosyl)-L-threonyl-[protein] + UDP + H(+). The protein operates within protein modification; protein glycosylation. Its function is as follows. O-linked mannose beta-1,4-N-acetylglucosaminyltransferase that transfers UDP-N-acetyl-D-glucosamine to the 4-position of the mannose to generate N-acetyl-D-glucosamine-beta-1,4-O-D-mannosylprotein. Involved in the biosynthesis of the phosphorylated O-mannosyl trisaccharide (N-acetylgalactosamine-beta-3-N-acetylglucosamine-beta-4-(phosphate-6-)mannose), a carbohydrate structure present in alpha-dystroglycan (DAG1), which is required for binding laminin G-like domain-containing extracellular proteins with high affinity. This Bos taurus (Bovine) protein is Protein O-linked-mannose beta-1,4-N-acetylglucosaminyltransferase 2 (POMGNT2).